A 274-amino-acid chain; its full sequence is Penicillin-insensitive murein endopeptidase (274 aa).

The signal sequence occupies residues 1–19 (MKKTAIALLAWFVSSASLA). Intrachain disulfides connect cysteine 44-cysteine 265, cysteine 187-cysteine 235, and cysteine 216-cysteine 223. Histidine 110, histidine 113, aspartate 120, aspartate 147, histidine 150, and histidine 211 together coordinate Zn(2+). The disordered stretch occupies residues 225 to 274 (DQPLPPPGDGCGAELQSWFEPPKPGTTKPEKKTPPPLPPSCQALLDEHVL).

Belongs to the peptidase M74 family. Dimer. Zn(2+) serves as cofactor.

Its subcellular location is the periplasm. Its function is as follows. Murein endopeptidase that cleaves the D-alanyl-meso-2,6-diamino-pimelyl amide bond that connects peptidoglycan strands. Likely plays a role in the removal of murein from the sacculus. The protein is Penicillin-insensitive murein endopeptidase of Salmonella choleraesuis (strain SC-B67).